The sequence spans 2149 residues: Serine/threonine-protein kinase WNK2 (2149 aa).

Positions 1 to 10 (MDGDGGRRDA) are enriched in basic and acidic residues. 2 disordered regions span residues 1–75 (MDGD…QRRV) and 87–183 (ERAR…EDDL). An omega-N-methylarginine mark is found at R19 and R30. Residue S45 is modified to Phosphoserine. Over residues 95–114 (APAPAAPAAPPGSPSVPSDP) the composition is skewed to pro residues. Basic and acidic residues predominate over residues 161-172 (AKPEPGRARKDE). Acidic residues predominate over residues 173–182 (PEEEEDDEDD). Positions 195–453 (LKFDIELGRG…IKDLLSHAFF (259 aa)) constitute a Protein kinase domain. Residues S205, 275-278 (TELM), and K325 contribute to the ATP site. D342 serves as the catalytic Proton acceptor. A phosphoserine; by autocatalysis mark is found at S352 and S356. S560 carries the post-translational modification Phosphoserine. 3 disordered regions span residues 578 to 630 (HAQS…DSQS), 703 to 728 (SMSF…APPV), and 1067 to 1133 (QEEQ…ERAS). Over residues 605–625 (ASVTSLASDSTFDSGQGSTVY) the composition is skewed to polar residues. Pro residues predominate over residues 709-728 (VLPPPSTPVPTGPSQPAPPV). A compositionally biased stretch (polar residues) spans 1081 to 1092 (QSSESFGGSDVT). Phosphoserine is present on S1098. The segment covering 1115–1126 (ARKHHRRSTRAR) has biased composition (basic residues). Phosphoserine is present on S1210. Disordered stretches follow at residues 1211–1234 (EDTD…CGLA) and 1270–1502 (PATD…GFVD). Composition is skewed to low complexity over residues 1275–1292 (SESS…EASQ) and 1317–1353 (SQAG…STVP). The span at 1386–1400 (RSAQCTAQPLSTGQG) shows a compositional bias: polar residues. Over residues 1470–1485 (LPSPPLGPTAPPPPPS) the composition is skewed to pro residues. 3 positions are modified to phosphoserine: S1507, S1566, and S1594. Disordered regions lie at residues 1521 to 1727 (VPTS…PSSP) and 1739 to 1778 (ASSI…GGVA). Over residues 1553-1567 (SDKTPSLTQQTQPSL) the composition is skewed to polar residues. Residues 1587–1597 (SSPMTAESSSS) show a composition bias toward low complexity. Positions 1610-1629 (ASDSSTAPSVPQDASGSSVP) are enriched in polar residues. A phosphoserine mark is found at S1725, S1726, S1770, and S1797. Positions 1916–1928 (ASSTGHLSDSSRG) are enriched in polar residues. The segment at 1916-1947 (ASSTGHLSDSSRGPPTKDPRGTKAVQTQQPCS) is disordered. At S1962 the chain carries Phosphoserine. Residues 2018–2031 (SSLYDSPGSSTSSL) show a composition bias toward polar residues. Disordered regions lie at residues 2018–2044 (SSLY…PTLH) and 2122–2149 (GPLS…EKPD). Residues 2122-2135 (GPLSTTATPGATPA) are compositionally biased toward low complexity.

It belongs to the protein kinase superfamily. Ser/Thr protein kinase family. WNK subfamily. Forms a complex with the phosphorylated form of STK39 in the brain. Mg(2+) is required as a cofactor. In terms of processing, autophosphorylated. Autophosphorylation at Ser-352 and Ser-356 promotes its activity. Brain and heart.

Its subcellular location is the cytoplasm. It localises to the cell membrane. It catalyses the reaction L-seryl-[protein] + ATP = O-phospho-L-seryl-[protein] + ADP + H(+). It carries out the reaction L-threonyl-[protein] + ATP = O-phospho-L-threonyl-[protein] + ADP + H(+). Activation requires autophosphorylation of Ser-356 and, to a lower extent, Ser-352. Functionally, serine/threonine-protein kinase component of the WNK2-SPAK/OSR1 kinase cascade, which plays an important role in the regulation of electrolyte homeostasis, cell signaling, survival, and proliferation. The WNK2-SPAK/OSR1 kinase cascade is composed of WNK2, which mediates phosphorylation and activation of downstream kinases OXSR1/OSR1 and STK39/SPAK. Following activation, OXSR1/OSR1 and STK39/SPAK catalyze phosphorylation of ion cotransporters, regulating their activity. Acts as an activator and inhibitor of sodium-coupled chloride cotransporters and potassium-coupled chloride cotransporters respectively. Activates SLC12A2, SCNN1A, SCNN1B, SCNN1D and SGK1 and inhibits SLC12A5. Negatively regulates the EGF-induced activation of the ERK/MAPK-pathway and the downstream cell cycle progression. Affects MAPK3/MAPK1 activity by modulating the activity of MAP2K1 and this modulation depends on phosphorylation of MAP2K1 by PAK1. WNK2 acts by interfering with the activity of PAK1 by controlling the balance of the activity of upstream regulators of PAK1 activity, RHOA and RAC1, which display reciprocal activity. This Mus musculus (Mouse) protein is Serine/threonine-protein kinase WNK2.